Here is a 206-residue protein sequence, read N- to C-terminus: Holliday junction branch migration complex subunit RuvA (206 aa).

A domain I region spans residues 1-62; it reads MYDYLKGLIT…EDAQVLYGFP (62 aa). The tract at residues 63 to 141 is domain II; sequence NLDQRELFRK…SLLETIELPS (79 aa). The interval 142–152 is flexible linker; it reads TEDELPLFGVH. The tract at residues 153–206 is domain III; that stretch reads PYKHELEEAILALAALGYSEKELEKIRPLLEDNDKLETTDAYMKQALQLLLKLK.

Belongs to the RuvA family. Homotetramer. Forms an RuvA(8)-RuvB(12)-Holliday junction (HJ) complex. HJ DNA is sandwiched between 2 RuvA tetramers; dsDNA enters through RuvA and exits via RuvB. An RuvB hexamer assembles on each DNA strand where it exits the tetramer. Each RuvB hexamer is contacted by two RuvA subunits (via domain III) on 2 adjacent RuvB subunits; this complex drives branch migration. In the full resolvosome a probable DNA-RuvA(4)-RuvB(12)-RuvC(2) complex forms which resolves the HJ.

The protein resides in the cytoplasm. The RuvA-RuvB-RuvC complex processes Holliday junction (HJ) DNA during genetic recombination and DNA repair, while the RuvA-RuvB complex plays an important role in the rescue of blocked DNA replication forks via replication fork reversal (RFR). RuvA specifically binds to HJ cruciform DNA, conferring on it an open structure. The RuvB hexamer acts as an ATP-dependent pump, pulling dsDNA into and through the RuvAB complex. HJ branch migration allows RuvC to scan DNA until it finds its consensus sequence, where it cleaves and resolves the cruciform DNA. This Lysinibacillus sphaericus (strain C3-41) protein is Holliday junction branch migration complex subunit RuvA.